The following is a 356-amino-acid chain: tRNA-specific 2-thiouridylase MnmA 2 (356 aa).

ATP is bound by residues 8–15 and Met-34; that span reads GMSGGVDS. The active-site Nucleophile is Cys-103. Cys-103 and Cys-199 are disulfide-bonded. Residue Gly-127 coordinates ATP. Residues 149-151 are interaction with tRNA; sequence KDQ. The Cysteine persulfide intermediate role is filled by Cys-199. The segment at 305-306 is interaction with tRNA; sequence RY.

It belongs to the MnmA/TRMU family.

The protein resides in the cytoplasm. It catalyses the reaction S-sulfanyl-L-cysteinyl-[protein] + uridine(34) in tRNA + AH2 + ATP = 2-thiouridine(34) in tRNA + L-cysteinyl-[protein] + A + AMP + diphosphate + H(+). Its function is as follows. Catalyzes the 2-thiolation of uridine at the wobble position (U34) of tRNA, leading to the formation of s(2)U34. This is tRNA-specific 2-thiouridylase MnmA 2 from Clostridium botulinum (strain Okra / Type B1).